A 260-amino-acid polypeptide reads, in one-letter code: MTSLKLLKEKAPLVICITNDVVKNFTANGLVALGASPAMSEFPADLEDLLKYAGGLLINIGTLTDENWKLYQAALKIAEKYNVPAVLDPVACGAGEYRKKVADDLINNYKLAAIRGNAGEIASLVGIDVASKGVDSAGVDNIDEIALAANEKFNIPIVVTGEVDAIAVNGEVVTIHNGSAMMPKVIGTGCLLGAVIASFIGLEKGQELKSLETAMLVYNIAGEMAEKRPNGHLPGTFKVEFINALYEITDEDVKEFKRVK.

Methionine 39 contacts substrate. 2 residues coordinate ATP: arginine 115 and threonine 160. Glycine 187 is a binding site for substrate.

The protein belongs to the Thz kinase family. It depends on Mg(2+) as a cofactor.

It carries out the reaction 5-(2-hydroxyethyl)-4-methylthiazole + ATP = 4-methyl-5-(2-phosphooxyethyl)-thiazole + ADP + H(+). It functions in the pathway cofactor biosynthesis; thiamine diphosphate biosynthesis; 4-methyl-5-(2-phosphoethyl)-thiazole from 5-(2-hydroxyethyl)-4-methylthiazole: step 1/1. In terms of biological role, catalyzes the phosphorylation of the hydroxyl group of 4-methyl-5-beta-hydroxyethylthiazole (THZ). The sequence is that of Hydroxyethylthiazole kinase 1 from Streptococcus pneumoniae (strain 70585).